Reading from the N-terminus, the 302-residue chain is tRNA dimethylallyltransferase (302 aa).

2–9 (GPTACGKS) contributes to the ATP binding site. Substrate is bound at residue 4–9 (TACGKS). Interaction with substrate tRNA regions lie at residues 27 to 30 (DSAL) and 149 to 153 (QRLIR).

This sequence belongs to the IPP transferase family. Monomer. Requires Mg(2+) as cofactor.

It carries out the reaction adenosine(37) in tRNA + dimethylallyl diphosphate = N(6)-dimethylallyladenosine(37) in tRNA + diphosphate. Its function is as follows. Catalyzes the transfer of a dimethylallyl group onto the adenine at position 37 in tRNAs that read codons beginning with uridine, leading to the formation of N6-(dimethylallyl)adenosine (i(6)A). This is tRNA dimethylallyltransferase from Buchnera aphidicola subsp. Acyrthosiphon pisum (strain 5A).